We begin with the raw amino-acid sequence, 343 residues long: Phosphate acyltransferase (343 aa).

It belongs to the PlsX family. As to quaternary structure, homodimer. Probably interacts with PlsY.

The protein resides in the cytoplasm. The enzyme catalyses a fatty acyl-[ACP] + phosphate = an acyl phosphate + holo-[ACP]. It participates in lipid metabolism; phospholipid metabolism. Its function is as follows. Catalyzes the reversible formation of acyl-phosphate (acyl-PO(4)) from acyl-[acyl-carrier-protein] (acyl-ACP). This enzyme utilizes acyl-ACP as fatty acyl donor, but not acyl-CoA. The chain is Phosphate acyltransferase from Halorhodospira halophila (strain DSM 244 / SL1) (Ectothiorhodospira halophila (strain DSM 244 / SL1)).